A 732-amino-acid polypeptide reads, in one-letter code: Ubiquitin carboxyl-terminal hydrolase 21 (732 aa).

Residues 1–10 are compositionally biased toward pro residues; sequence MAEFSDPPPS. The tract at residues 1-111 is disordered; the sequence is MAEFSDPPPS…ISPVSNNNHL (111 aa). 2 stretches are compositionally biased toward polar residues: residues 11-31 and 38-53; these read NLSSSHKLTKPNQTLDESSPT and VTNSLSLSSPIRQIQA. The span at 55 to 69 shows a compositional bias: low complexity; that stretch reads SPAKPDGSSSSPPDK. The USP domain maps to 163–469; that stretch reads AGLYNSGNTC…PAYILFYARE (307 aa). Cysteine 172 serves as the catalytic Nucleophile. The Proton acceptor role is filled by histidine 428. Residues 534-732 form a disordered region; the sequence is KEEVFHSAES…SSNMRRSIKL (199 aa). Residues 540–551 are compositionally biased toward low complexity; that stretch reads SAESSNNEDSSA. The span at 583 to 609 shows a compositional bias: basic and acidic residues; sequence AYIDKSEKPFAETSQPKEPKPFADRAS. Over residues 719 to 732 the composition is skewed to basic residues; that stretch reads KKKKSSNMRRSIKL.

This sequence belongs to the peptidase C19 family.

It carries out the reaction Thiol-dependent hydrolysis of ester, thioester, amide, peptide and isopeptide bonds formed by the C-terminal Gly of ubiquitin (a 76-residue protein attached to proteins as an intracellular targeting signal).. In terms of biological role, recognizes and hydrolyzes the peptide bond at the C-terminal Gly of ubiquitin. Involved in the processing of poly-ubiquitin precursors as well as that of ubiquitinated proteins. The polypeptide is Ubiquitin carboxyl-terminal hydrolase 21 (UBP21) (Arabidopsis thaliana (Mouse-ear cress)).